The following is an 812-amino-acid chain: cAMP-regulated phosphoprotein 21 (812 aa).

A disordered region spans residues 1 to 130 (MSEQGDLNQA…KDKTSEKPKI (130 aa)). An N-acetylserine modification is found at S2. Low complexity predominate over residues 9–25 (QAIAEEGGTEQETATPE). Residues 32–58 (ESLDEEEKLELQRRLEAQNQERRKSKS) adopt a coiled-coil conformation. S33 carries the phosphoserine modification. Basic and acidic residues predominate over residues 40-53 (LELQRRLEAQNQER). Residue S56 is modified to Phosphoserine. A compositionally biased stretch (low complexity) spans 90-100 (IHLQLSSFSSL). Over residues 102–130 (EEDKSRKDDSEREKEKDKNKDKTSEKPKI) the composition is skewed to basic and acidic residues. A Phosphoserine modification is found at S134. The R3H domain occupies 164-227 (RMILLKMEQE…SVIINKTSST (64 aa)). Positions 228-300 (RIPEQRFCEH…VRERIFAHDS (73 aa)) constitute an SUZ domain. The disordered stretch occupies residues 246–281 (SQKRFILKRDNSSIDKEDNQQNRMHPFRDDRRSKSI). S300 bears the Phosphoserine mark. 3 disordered regions span residues 332–436 (RGNR…PLVS), 485–544 (HTGQ…MAGP), and 561–632 (LSRQ…QQPP). Low complexity predominate over residues 339–349 (GRTSGSRQSSS). The span at 351–360 (NELKWSDHQR) shows a compositional bias: basic and acidic residues. Residues 361-373 (AWSSTDSDSSNRN) show a composition bias toward polar residues. Phosphoserine occurs at positions 363 and 383. Over residues 391–423 (TRGDSTSSTRSTGKLSKAGSESSSSAGSSGSLS) the composition is skewed to low complexity. S562 is subject to Phosphoserine. Positions 582–602 (LMPQPAQQPSYVIASTGQQLP) are enriched in polar residues. Positions 619 to 632 (QPPPSPQGFVQQPP) are enriched in pro residues. An Asymmetric dimethylarginine modification is found at R655.

Interacts with CALM1. Phosphorylation at Ser-56 favors interaction with CALM1. In terms of processing, isoform 1 is methylated by CARM1 at Arg-655 in immature thymocytes. As to expression, isoform 2 is expressed in brain. Isoform 1 is present in immature thymocytes (at protein level).

The protein localises to the cytoplasm. Isoform 2 may act as a competitive inhibitor of calmodulin-dependent enzymes such as calcineurin in neurons. The chain is cAMP-regulated phosphoprotein 21 (ARPP21) from Homo sapiens (Human).